The primary structure comprises 247 residues: AEGLNREQYVYLANVSEQAERYEEMVEFMQKVVVGSTPASELTVEERNLLSVAYKNVIGSLRAAWRIVSSIEQKEEGRKNDDHVSLVKHYRSKVENELTQVCATILSLLDSNLVPSASASESKVFYLKMKGDYHRYLAEFKVGDERKTATEDTMLSYKAAQDIASADLPPTHPIRLGLALNFSVFYYEILNQSDKACAMAKQAFEEAIAELDTLGEESYKDSTLIMQLLRDNLTLWTSDVQDQLDEP.

It belongs to the 14-3-3 family.

This is 14-3-3-like protein B (GF14B) from Glycine max (Soybean).